A 294-amino-acid chain; its full sequence is 4-hydroxy-tetrahydrodipicolinate synthase (294 aa).

Thr47 is a pyruvate binding site. Tyr135 serves as the catalytic Proton donor/acceptor. Lys163 (schiff-base intermediate with substrate) is an active-site residue. Thr205 is a binding site for pyruvate.

This sequence belongs to the DapA family. Homotetramer; dimer of dimers.

It is found in the cytoplasm. It catalyses the reaction L-aspartate 4-semialdehyde + pyruvate = (2S,4S)-4-hydroxy-2,3,4,5-tetrahydrodipicolinate + H2O + H(+). It functions in the pathway amino-acid biosynthesis; L-lysine biosynthesis via DAP pathway; (S)-tetrahydrodipicolinate from L-aspartate: step 3/4. Catalyzes the condensation of (S)-aspartate-beta-semialdehyde [(S)-ASA] and pyruvate to 4-hydroxy-tetrahydrodipicolinate (HTPA). This chain is 4-hydroxy-tetrahydrodipicolinate synthase, found in Rickettsia conorii (strain ATCC VR-613 / Malish 7).